The sequence spans 359 residues: Histidinol-phosphate aminotransferase (359 aa).

K220 carries the N6-(pyridoxal phosphate)lysine modification.

This sequence belongs to the class-II pyridoxal-phosphate-dependent aminotransferase family. Histidinol-phosphate aminotransferase subfamily. As to quaternary structure, homodimer. Requires pyridoxal 5'-phosphate as cofactor.

The enzyme catalyses L-histidinol phosphate + 2-oxoglutarate = 3-(imidazol-4-yl)-2-oxopropyl phosphate + L-glutamate. It functions in the pathway amino-acid biosynthesis; L-histidine biosynthesis; L-histidine from 5-phospho-alpha-D-ribose 1-diphosphate: step 7/9. The chain is Histidinol-phosphate aminotransferase from Neisseria gonorrhoeae (strain ATCC 700825 / FA 1090).